Reading from the N-terminus, the 611-residue chain is MRSNGCGDLRKEHIDNSVQLCGWVDRRRDHGGVIFIDLRDRTGTVQITVDPDLGAEAFAVAEHLRSETVLQISGKVRARPAESLNEKLATGAVEVLASGITVLNSVKGNLPFPVSVHDEENTREELRLRHRYLDLRRKRMNDNLRLRAQTIQAARRFLEDEGFIEVETPVLTRSTPEGARDYVLPSRVCGGEWFALPQSPQLFKQLLMVGGIERYYQVARCFRDEDLRADRQPEFTQLDIEMSFMDQEEILQLNESLICSIWKAVKGIDLPRPFPRMTWHDAMERYGTDRPDTRYGMELTNVSDIVKDMGFKVFSGAVKNGGAVKCIAVPGGNEALSNVRIKPGGDVFSEAQKAGAGGLAFIRVRDGGEIDTIGAIKDNLSDEQKQELLSRTGAEPGTLLLFGAGDTATVNKALDRVRQYLAKELGMVKADRDNDQWNFLWVVDFPMFEFNSDENRYEALHHPFCAPNAEDLGSDASQWADTLPGARAQAYDLVLNGLELGGGSLRIHDSALQRQVLQTVGLPLEEAQEQFGFLMDALDVGAPPHGGLAFGVDRMVMLLAGEESIRDTIAFPKTQQARCLMTNAPGGVADKQLEELHVASTWVDPTEEDSN.

Residue Glu177 coordinates L-aspartate. The interval 201–204 (QLFK) is aspartate. Position 223 (Arg223) interacts with L-aspartate. ATP-binding positions include 223–225 (RDE) and Gln232. His461 contributes to the L-aspartate binding site. Position 499 (Glu499) interacts with ATP. Arg506 contacts L-aspartate. 551-554 (GVDR) provides a ligand contact to ATP.

Belongs to the class-II aminoacyl-tRNA synthetase family. Type 1 subfamily. As to quaternary structure, homodimer.

Its subcellular location is the cytoplasm. The catalysed reaction is tRNA(Asx) + L-aspartate + ATP = L-aspartyl-tRNA(Asx) + AMP + diphosphate. Its function is as follows. Aspartyl-tRNA synthetase with relaxed tRNA specificity since it is able to aspartylate not only its cognate tRNA(Asp) but also tRNA(Asn). Reaction proceeds in two steps: L-aspartate is first activated by ATP to form Asp-AMP and then transferred to the acceptor end of tRNA(Asp/Asn). This chain is Aspartate--tRNA(Asp/Asn) ligase, found in Synechococcus sp. (strain WH7803).